The following is a 179-amino-acid chain: Bifunctional protein PyrR (179 aa).

Residues 100 to 112 carry the PRPP-binding motif; the sequence is VILVDDVLFTGRT.

It belongs to the purine/pyrimidine phosphoribosyltransferase family. PyrR subfamily. As to quaternary structure, homodimer and homohexamer; in equilibrium.

It catalyses the reaction UMP + diphosphate = 5-phospho-alpha-D-ribose 1-diphosphate + uracil. Its function is as follows. Regulates transcriptional attenuation of the pyrimidine nucleotide (pyr) operon by binding in a uridine-dependent manner to specific sites on pyr mRNA. This disrupts an antiterminator hairpin in the RNA and favors formation of a downstream transcription terminator, leading to a reduced expression of downstream genes. Also displays a weak uracil phosphoribosyltransferase activity which is not physiologically significant. The chain is Bifunctional protein PyrR from Geobacillus sp. (strain WCH70).